A 220-amino-acid polypeptide reads, in one-letter code: Large ribosomal subunit protein uL3 (220 aa).

The interval 61-81 (KGSKSNKYANKPAEGHAKKAD) is disordered.

It belongs to the universal ribosomal protein uL3 family. As to quaternary structure, part of the 50S ribosomal subunit. Forms a cluster with proteins L14 and L19.

One of the primary rRNA binding proteins, it binds directly near the 3'-end of the 23S rRNA, where it nucleates assembly of the 50S subunit. This is Large ribosomal subunit protein uL3 from Staphylococcus epidermidis (strain ATCC 35984 / DSM 28319 / BCRC 17069 / CCUG 31568 / BM 3577 / RP62A).